The sequence spans 101 residues: Large ribosomal subunit protein bL20 (101 aa).

Belongs to the bacterial ribosomal protein bL20 family.

Its function is as follows. Binds directly to 23S ribosomal RNA and is necessary for the in vitro assembly process of the 50S ribosomal subunit. It is not involved in the protein synthesizing functions of that subunit. This is Large ribosomal subunit protein bL20 (rplT) from Carsonella ruddii (strain PV).